The following is a 125-amino-acid chain: NADPH-dependent 7-cyano-7-deazaguanine reductase (125 aa).

The active-site Thioimide intermediate is the C40. The active-site Proton donor is D47. Substrate is bound by residues 62–64 (LET) and 81–82 (HE).

The protein belongs to the GTP cyclohydrolase I family. QueF type 1 subfamily.

It is found in the cytoplasm. It carries out the reaction 7-aminomethyl-7-carbaguanine + 2 NADP(+) = 7-cyano-7-deazaguanine + 2 NADPH + 3 H(+). It participates in tRNA modification; tRNA-queuosine biosynthesis. Catalyzes the NADPH-dependent reduction of 7-cyano-7-deazaguanine (preQ0) to 7-aminomethyl-7-deazaguanine (preQ1). The protein is NADPH-dependent 7-cyano-7-deazaguanine reductase of Frankia casuarinae (strain DSM 45818 / CECT 9043 / HFP020203 / CcI3).